The chain runs to 206 residues: Small ribosomal subunit protein uS4A (206 aa).

The region spanning 98–164 (MRLDNVVYRL…EKFKTFAENP (67 aa)) is the S4 RNA-binding domain.

The protein belongs to the universal ribosomal protein uS4 family. As to quaternary structure, part of the 30S ribosomal subunit. Contacts protein S5. The interaction surface between S4 and S5 is involved in control of translational fidelity.

In terms of biological role, one of the primary rRNA binding proteins, it binds directly to 16S rRNA where it nucleates assembly of the body of the 30S subunit. Functionally, with S5 and S12 plays an important role in translational accuracy. This Clostridium botulinum (strain ATCC 19397 / Type A) protein is Small ribosomal subunit protein uS4A.